The following is a 126-amino-acid chain: Fluoride-specific ion channel FluC (126 aa).

Helical transmembrane passes span 4 to 24, 36 to 56, 68 to 88, and 99 to 119; these read SILAIAIGAAAGALLRWFLGL, GTLAANLVGGYIIGVAVALFA, LIITGFCGGLTTFSTFSAEVV, and AFAAIAVHVSGSLLMTMAGIA. Residues glycine 75 and threonine 78 each contribute to the Na(+) site.

This sequence belongs to the fluoride channel Fluc/FEX (TC 1.A.43) family.

It is found in the cell inner membrane. It catalyses the reaction fluoride(in) = fluoride(out). Na(+) is not transported, but it plays an essential structural role and its presence is essential for fluoride channel function. In terms of biological role, fluoride-specific ion channel. Important for reducing fluoride concentration in the cell, thus reducing its toxicity. This chain is Fluoride-specific ion channel FluC, found in Chromobacterium violaceum (strain ATCC 12472 / DSM 30191 / JCM 1249 / CCUG 213 / NBRC 12614 / NCIMB 9131 / NCTC 9757 / MK).